Consider the following 191-residue polypeptide: Protein YceI (191 aa).

The N-terminal stretch at 1–22 is a signal peptide; that stretch reads MKKNLLGFTLASLLFTTGSAVA.

The protein belongs to the UPF0312 family. Type 1 subfamily.

Its subcellular location is the periplasm. In Salmonella dublin (strain CT_02021853), this protein is Protein YceI.